Reading from the N-terminus, the 318-residue chain is Beta-ketoacyl-[acyl-carrier-protein] synthase III (318 aa).

Active-site residues include Cys-112 and His-245. The interval 246 to 250 (QANIR) is ACP-binding. The active site involves Asn-275.

The protein belongs to the thiolase-like superfamily. FabH family. In terms of assembly, homodimer.

Its subcellular location is the cytoplasm. The catalysed reaction is malonyl-[ACP] + acetyl-CoA + H(+) = 3-oxobutanoyl-[ACP] + CO2 + CoA. It functions in the pathway lipid metabolism; fatty acid biosynthesis. Catalyzes the condensation reaction of fatty acid synthesis by the addition to an acyl acceptor of two carbons from malonyl-ACP. Catalyzes the first condensation reaction which initiates fatty acid synthesis and may therefore play a role in governing the total rate of fatty acid production. Possesses both acetoacetyl-ACP synthase and acetyl transacylase activities. Its substrate specificity determines the biosynthesis of branched-chain and/or straight-chain of fatty acids. The polypeptide is Beta-ketoacyl-[acyl-carrier-protein] synthase III (Rickettsia conorii (strain ATCC VR-613 / Malish 7)).